Here is a 713-residue protein sequence, read N- to C-terminus: Probable 1-deoxy-D-xylulose-5-phosphate synthase 2, chloroplastic (713 aa).

The transit peptide at 1 to 30 (MALQASSSPSMFRAIPTNTNASCRRKLQVR) directs the protein to the chloroplast. Thiamine diphosphate contacts are provided by residues histidine 140 and 181–183 (GHS). Residue aspartate 212 coordinates Mg(2+). Thiamine diphosphate-binding positions include 213-214 (GA), asparagine 241, tyrosine 362, and glutamate 444. Mg(2+) is bound at residue asparagine 241.

This sequence belongs to the transketolase family. DXPS subfamily. In terms of assembly, homodimer. Requires Mg(2+) as cofactor. Thiamine diphosphate serves as cofactor.

The protein localises to the plastid. The protein resides in the chloroplast. It carries out the reaction D-glyceraldehyde 3-phosphate + pyruvate + H(+) = 1-deoxy-D-xylulose 5-phosphate + CO2. The protein operates within metabolic intermediate biosynthesis; 1-deoxy-D-xylulose 5-phosphate biosynthesis; 1-deoxy-D-xylulose 5-phosphate from D-glyceraldehyde 3-phosphate and pyruvate: step 1/1. Its function is as follows. Catalyzes the acyloin condensation reaction between C atoms 2 and 3 of pyruvate and glyceraldehyde 3-phosphate to yield 1-deoxy-D-xylulose-5-phosphate (DXP). Is a limiting enzyme for plastidic isoprenoid biosynthesis and essential for chloroplast development. The chain is Probable 1-deoxy-D-xylulose-5-phosphate synthase 2, chloroplastic from Oryza sativa subsp. japonica (Rice).